A 215-amino-acid polypeptide reads, in one-letter code: MAKPLNERFFIPHEIKVMGRWSTEDVEVRDPSLKPYINLEPRLLPHTHGRHAKKHFGKANVHIVERLINKIMRSGGSHYKVAGHFMRREHRSLNSKKVKAYEVVKEAFKIIEQRTGKNPIQVLVWAIENAAPREDTTSVMFGGIRYHVAVDISPMRRLDVALRNIALGASAKCYRNKMSFAEALAEEIILAANKDPKSYAYSKKLEIERIAESSR.

It belongs to the universal ribosomal protein uS7 family. In terms of assembly, part of the 30S ribosomal subunit.

One of the primary rRNA binding proteins, it binds directly to 16S rRNA where it nucleates assembly of the head domain of the 30S subunit. Is located at the subunit interface close to the decoding center. In Pyrococcus furiosus (strain ATCC 43587 / DSM 3638 / JCM 8422 / Vc1), this protein is Small ribosomal subunit protein uS7.